The following is a 201-amino-acid chain: Peptidyl-tRNA hydrolase (201 aa).

Tyr-14 contacts tRNA. The active-site Proton acceptor is the His-19. Residues Tyr-64, Asn-66, and Asn-112 each contribute to the tRNA site.

The protein belongs to the PTH family. As to quaternary structure, monomer.

Its subcellular location is the cytoplasm. The enzyme catalyses an N-acyl-L-alpha-aminoacyl-tRNA + H2O = an N-acyl-L-amino acid + a tRNA + H(+). Functionally, hydrolyzes ribosome-free peptidyl-tRNAs (with 1 or more amino acids incorporated), which drop off the ribosome during protein synthesis, or as a result of ribosome stalling. Catalyzes the release of premature peptidyl moieties from peptidyl-tRNA molecules trapped in stalled 50S ribosomal subunits, and thus maintains levels of free tRNAs and 50S ribosomes. The sequence is that of Peptidyl-tRNA hydrolase from Afipia carboxidovorans (strain ATCC 49405 / DSM 1227 / KCTC 32145 / OM5) (Oligotropha carboxidovorans).